A 186-amino-acid polypeptide reads, in one-letter code: dTTP/UTP pyrophosphatase (186 aa).

Aspartate 67 functions as the Proton acceptor in the catalytic mechanism.

The protein belongs to the Maf family. YhdE subfamily. A divalent metal cation serves as cofactor.

The protein localises to the cytoplasm. It carries out the reaction dTTP + H2O = dTMP + diphosphate + H(+). The enzyme catalyses UTP + H2O = UMP + diphosphate + H(+). Its function is as follows. Nucleoside triphosphate pyrophosphatase that hydrolyzes dTTP and UTP. May have a dual role in cell division arrest and in preventing the incorporation of modified nucleotides into cellular nucleic acids. The sequence is that of dTTP/UTP pyrophosphatase from Carboxydothermus hydrogenoformans (strain ATCC BAA-161 / DSM 6008 / Z-2901).